A 556-amino-acid polypeptide reads, in one-letter code: Dihydroxy-acid dehydratase (556 aa).

Position 78 (aspartate 78) interacts with Mg(2+). Cysteine 119 contacts [2Fe-2S] cluster. Aspartate 120 and lysine 121 together coordinate Mg(2+). Lysine 121 is subject to N6-carboxylysine. Cysteine 191 is a [2Fe-2S] cluster binding site. Position 442 (glutamate 442) interacts with Mg(2+). Serine 468 acts as the Proton acceptor in catalysis.

It belongs to the IlvD/Edd family. Homodimer. The cofactor is [2Fe-2S] cluster. Mg(2+) is required as a cofactor.

It catalyses the reaction (2R)-2,3-dihydroxy-3-methylbutanoate = 3-methyl-2-oxobutanoate + H2O. The catalysed reaction is (2R,3R)-2,3-dihydroxy-3-methylpentanoate = (S)-3-methyl-2-oxopentanoate + H2O. It functions in the pathway amino-acid biosynthesis; L-isoleucine biosynthesis; L-isoleucine from 2-oxobutanoate: step 3/4. Its pathway is amino-acid biosynthesis; L-valine biosynthesis; L-valine from pyruvate: step 3/4. Its function is as follows. Functions in the biosynthesis of branched-chain amino acids. Catalyzes the dehydration of (2R,3R)-2,3-dihydroxy-3-methylpentanoate (2,3-dihydroxy-3-methylvalerate) into 2-oxo-3-methylpentanoate (2-oxo-3-methylvalerate) and of (2R)-2,3-dihydroxy-3-methylbutanoate (2,3-dihydroxyisovalerate) into 2-oxo-3-methylbutanoate (2-oxoisovalerate), the penultimate precursor to L-isoleucine and L-valine, respectively. The protein is Dihydroxy-acid dehydratase of Caldanaerobacter subterraneus subsp. tengcongensis (strain DSM 15242 / JCM 11007 / NBRC 100824 / MB4) (Thermoanaerobacter tengcongensis).